The chain runs to 178 residues: Large ribosomal subunit protein uL6 (178 aa).

It belongs to the universal ribosomal protein uL6 family. In terms of assembly, part of the 50S ribosomal subunit.

In terms of biological role, this protein binds to the 23S rRNA, and is important in its secondary structure. It is located near the subunit interface in the base of the L7/L12 stalk, and near the tRNA binding site of the peptidyltransferase center. The sequence is that of Large ribosomal subunit protein uL6 from Helicobacter pylori (strain G27).